The chain runs to 485 residues: Aldehyde dehydrogenase family 3 member A2 (485 aa).

At 1–463 the chain is on the cytoplasmic side; that stretch reads MELEVRRVRQ…FLLKRFNKEK (463 aa). NAD(+) is bound at residue 185–190; that stretch reads GNTAVG. Catalysis depends on residues Glu207 and Cys241. A Phosphoserine modification is found at Ser293. The helical transmembrane segment at 464-484 threads the bilayer; sequence LGLLLLTFLGIVAAVLVKAEY. The Prevents secretion from ER signature appears at 481–484; it reads KAEY.

The protein belongs to the aldehyde dehydrogenase family. Homodimer.

It localises to the microsome membrane. It is found in the endoplasmic reticulum membrane. The catalysed reaction is an aldehyde + NAD(+) + H2O = a carboxylate + NADH + 2 H(+). The enzyme catalyses a fatty aldehyde + NAD(+) + H2O = a fatty acid + NADH + 2 H(+). It carries out the reaction (2E)-hexadecenal + NAD(+) + H2O = (E)-hexadec-2-enoate + NADH + 2 H(+). It catalyses the reaction hexadecanoate + NADH + 2 H(+) = hexadecanal + NAD(+) + H2O. The catalysed reaction is 22-oxodocosanoate + NAD(+) + H2O = docosanedioate + NADH + 2 H(+). The enzyme catalyses 2,6,10,14-tetramethylpentadecanal + NAD(+) + H2O = 2,6,10,14-tetramethylpentadecanoate + NADH + 2 H(+). It carries out the reaction octadecanal + NAD(+) + H2O = octadecanoate + NADH + 2 H(+). It catalyses the reaction dodecanoate + NADH + 2 H(+) = dodecanal + NAD(+) + H2O. The catalysed reaction is decanal + NAD(+) + H2O = decanoate + NADH + 2 H(+). The enzyme catalyses tetradecanal + NAD(+) + H2O = tetradecanoate + NADH + 2 H(+). It carries out the reaction octanal + NAD(+) + H2O = octanoate + NADH + 2 H(+). It catalyses the reaction heptanal + NAD(+) + H2O = heptanoate + NADH + 2 H(+). The catalysed reaction is (2E,6E)-farnesal + NAD(+) + H2O = (2E,6E)-farnesoate + NADH + 2 H(+). Catalyzes the oxidation of medium and long-chain aliphatic aldehydes to fatty acids. Active on a variety of saturated and unsaturated aliphatic aldehydes between 6 and 24 carbons in length. Responsible for conversion of the sphingosine 1-phosphate (S1P) degradation product hexadecenal to hexadecenoic acid. This Pongo abelii (Sumatran orangutan) protein is Aldehyde dehydrogenase family 3 member A2 (ALDH3A2).